The chain runs to 434 residues: Protein HEAT INTOLERANT 4 (434 aa).

A Nuclear localization signal 1 motif is present at residues Met-1–Lys-8. Residues Met-1–Arg-15 show a composition bias toward basic residues. The segment at Met-1 to Ala-131 is disordered. A compositionally biased stretch (basic and acidic residues) spans Glu-30 to Asn-53. A compositionally biased stretch (acidic residues) spans Gly-54–Glu-82. Basic and acidic residues predominate over residues Asp-83 to Pro-98. Residues Glu-95–Arg-102 carry the Nuclear localization signal 2 motif. Residues Val-99–Thr-110 are compositionally biased toward basic residues. Residues Lys-111 to Pro-122 are compositionally biased toward basic and acidic residues. Residues Val-363–Gln-394 adopt a coiled-coil conformation. The Nuclear localization signal 3 motif lies at Ala-370–Ala-377.

Its subcellular location is the nucleus. It is found in the nucleolus. Functionally, essential protein required for basal thermotolerance, especially during heat-induced chromocentre decondensation, thus regulating transcriptional gene silencing (TGS). This Arabidopsis thaliana (Mouse-ear cress) protein is Protein HEAT INTOLERANT 4.